Consider the following 340-residue polypeptide: Glycerol-3-phosphate dehydrogenase [NAD(P)+] (340 aa).

Positions 14, 15, 35, and 108 each coordinate NADPH. Sn-glycerol 3-phosphate is bound by residues K108 and G136. An NADPH-binding site is contributed by A140. The sn-glycerol 3-phosphate site is built by K191, D244, S254, R255, and N256. The active-site Proton acceptor is the K191. R255 contacts NADPH. E281 is an NADPH binding site.

Belongs to the NAD-dependent glycerol-3-phosphate dehydrogenase family.

It localises to the cytoplasm. It carries out the reaction sn-glycerol 3-phosphate + NAD(+) = dihydroxyacetone phosphate + NADH + H(+). The enzyme catalyses sn-glycerol 3-phosphate + NADP(+) = dihydroxyacetone phosphate + NADPH + H(+). Its pathway is membrane lipid metabolism; glycerophospholipid metabolism. Catalyzes the reduction of the glycolytic intermediate dihydroxyacetone phosphate (DHAP) to sn-glycerol 3-phosphate (G3P), the key precursor for phospholipid synthesis. This is Glycerol-3-phosphate dehydrogenase [NAD(P)+] from Pseudomonas aeruginosa (strain LESB58).